The chain runs to 407 residues: Substance-P receptor (407 aa).

The disordered stretch occupies residues 1–20 (MDNVLPVDSDLFPNTSTNTS). The Extracellular portion of the chain corresponds to 1 to 31 (MDNVLPVDSDLFPNTSTNTSESNQFVQPTWQ). 2 N-linked (GlcNAc...) asparagine glycosylation sites follow: N14 and N18. Residues 32–54 (IVLWAAAYTVIVVTSVVGNVVVI) form a helical membrane-spanning segment. At 55 to 64 (WIILAHKRMR) the chain is on the cytoplasmic side. Residues 65–86 (TVTNYFLVNLAFAEACMAAFNT) traverse the membrane as a helical segment. The Extracellular segment spans residues 87–106 (VVNFTYAVHNVWYYGLFYCK). C105 and C180 are disulfide-bonded. The helical transmembrane segment at 107–128 (FHNFFPIAALFASIYSMTAVAF) threads the bilayer. The Cytoplasmic segment spans residues 129–148 (DRYMAIIHPLQPRLSATATK). Residues 149-169 (VVIFVIWVLALLLAFPQGYYS) form a helical membrane-spanning segment. The Extracellular segment spans residues 170-194 (TTETMPSRVVCMIEWPEHPNRTYEK). Residues 195–219 (AYHICVTVLIYFLPLLVIGYAYTVV) traverse the membrane as a helical segment. The Cytoplasmic segment spans residues 220-248 (GITLWASEIPGDSSDRYHEQVSAKRKVVK). A helical transmembrane segment spans residues 249–270 (MMIVVVCTFAICWLPFHIFFLL). At 271–283 (PYINPDLYLKKFI) the chain is on the extracellular side. A helical membrane pass occupies residues 284–308 (QQVYLASMWLAMSSTMYNPIIYCCL). Residues 309–407 (NDRFRLGFKH…SSSFYSNMLA (99 aa)) are Cytoplasmic-facing. A lipid anchor (S-palmitoyl cysteine) is attached at C322. Residues 362–407 (VGAHEDEPEEGPKATPSSLDLTSNGSSRSNSKTMTESSSFYSNMLA) are disordered. Residues 376-407 (TPSSLDLTSNGSSRSNSKTMTESSSFYSNMLA) are compositionally biased toward polar residues.

Belongs to the G-protein coupled receptor 1 family. As to quaternary structure, interacts with ARRB1.

Its subcellular location is the cell membrane. Its function is as follows. This is a receptor for the tachykinin neuropeptide substance P. It is probably associated with G proteins that activate a phosphatidylinositol-calcium second messenger system. The rank order of affinity of this receptor to tachykinins is: substance P &gt; substance K &gt; neuromedin K. The polypeptide is Substance-P receptor (Tacr1) (Mus musculus (Mouse)).